Here is a 335-residue protein sequence, read N- to C-terminus: Dihydroorotate dehydrogenase (quinone) (335 aa).

Residues 59-63 (AGLDK) and Thr-83 each bind FMN. Lys-63 is a substrate binding site. Residue 108–112 (NRMGF) participates in substrate binding. FMN contacts are provided by Asn-136 and Asn-169. A substrate-binding site is contributed by Asn-169. The active-site Nucleophile is Ser-172. Asn-174 contributes to the substrate binding site. FMN is bound by residues Lys-214 and Thr-242. 243 to 244 (NT) contacts substrate. FMN-binding positions include Gly-265, Gly-294, and 315-316 (YS).

It belongs to the dihydroorotate dehydrogenase family. Type 2 subfamily. In terms of assembly, monomer. Requires FMN as cofactor.

It localises to the cell membrane. The enzyme catalyses (S)-dihydroorotate + a quinone = orotate + a quinol. It participates in pyrimidine metabolism; UMP biosynthesis via de novo pathway; orotate from (S)-dihydroorotate (quinone route): step 1/1. In terms of biological role, catalyzes the conversion of dihydroorotate to orotate with quinone as electron acceptor. This is Dihydroorotate dehydrogenase (quinone) from Neisseria meningitidis serogroup A / serotype 4A (strain DSM 15465 / Z2491).